The chain runs to 298 residues: Lipoyl synthase (298 aa).

Cys-40, Cys-45, Cys-51, Cys-67, Cys-71, Cys-74, and Ser-280 together coordinate [4Fe-4S] cluster. Positions 53-269 (AVRRTATFMI…KEIALSKGFT (217 aa)) constitute a Radical SAM core domain.

Belongs to the radical SAM superfamily. Lipoyl synthase family. Requires [4Fe-4S] cluster as cofactor.

Its subcellular location is the cytoplasm. It carries out the reaction [[Fe-S] cluster scaffold protein carrying a second [4Fe-4S](2+) cluster] + N(6)-octanoyl-L-lysyl-[protein] + 2 oxidized [2Fe-2S]-[ferredoxin] + 2 S-adenosyl-L-methionine + 4 H(+) = [[Fe-S] cluster scaffold protein] + N(6)-[(R)-dihydrolipoyl]-L-lysyl-[protein] + 4 Fe(3+) + 2 hydrogen sulfide + 2 5'-deoxyadenosine + 2 L-methionine + 2 reduced [2Fe-2S]-[ferredoxin]. It functions in the pathway protein modification; protein lipoylation via endogenous pathway; protein N(6)-(lipoyl)lysine from octanoyl-[acyl-carrier-protein]. Catalyzes the radical-mediated insertion of two sulfur atoms into the C-6 and C-8 positions of the octanoyl moiety bound to the lipoyl domains of lipoate-dependent enzymes, thereby converting the octanoylated domains into lipoylated derivatives. The chain is Lipoyl synthase from Geobacillus sp. (strain WCH70).